A 434-amino-acid polypeptide reads, in one-letter code: 3-ketoacyl-CoA thiolase A, peroxisomal (434 aa).

A peroxisome-targeting transit peptide spans 1 to 36 (MSESVGRTSAMHRLQVVLGHLAGRPESSSALQAAPC). Residues 11-36 (MHRLQVVLGHLAGRPESSSALQAAPC) are PTS2-type peroxisomal targeting signal. The Acyl-thioester intermediate role is filled by C133. N6-acetyllysine is present on residues K183 and K244. Residues H387 and C418 each act as proton acceptor in the active site.

This sequence belongs to the thiolase-like superfamily. Thiolase family. Homodimer. Interacts (via PTS2-type peroxisomal targeting signal region) with PEX7; leading to its translocation into peroxisomes.

It localises to the peroxisome. The enzyme catalyses an acyl-CoA + acetyl-CoA = a 3-oxoacyl-CoA + CoA. It catalyses the reaction 2 acetyl-CoA = acetoacetyl-CoA + CoA. The catalysed reaction is tetradecanoyl-CoA + acetyl-CoA = 3-oxohexadecanoyl-CoA + CoA. It carries out the reaction hexanoyl-CoA + acetyl-CoA = 3-oxooctanoyl-CoA + CoA. The enzyme catalyses 3-oxohexadecanedioyl-CoA + CoA = tetradecanedioyl-CoA + acetyl-CoA. It catalyses the reaction 3-oxo-(6Z,9Z,12Z,15Z,18Z,21Z)-tetracosahexaenoyl-CoA + CoA = (4Z,7Z,10Z,13Z,16Z,19Z)-docosahexaenoyl-CoA + acetyl-CoA. It participates in lipid metabolism; peroxisomal fatty acid beta-oxidation. Responsible for the thiolytic cleavage of straight chain 3-keto fatty acyl-CoAs (3-oxoacyl-CoAs). Plays an important role in fatty acid peroxisomal beta-oxidation. Catalyzes the cleavage of short, medium, long, and very long straight chain 3-oxoacyl-CoAs. Medium chain straight 3-oxoacyl-CoAs are preferred substrates. The polypeptide is 3-ketoacyl-CoA thiolase A, peroxisomal (Rattus norvegicus (Rat)).